The following is a 520-amino-acid chain: Maturase K (520 aa).

Belongs to the intron maturase 2 family. MatK subfamily.

The protein localises to the plastid. It is found in the chloroplast. Functionally, usually encoded in the trnK tRNA gene intron. Probably assists in splicing its own and other chloroplast group II introns. The polypeptide is Maturase K (Aspidistra elatior (Cast-iron plant)).